We begin with the raw amino-acid sequence, 274 residues long: Large ribosomal subunit protein uL2cz/uL2cy (274 aa).

Disordered stretches follow at residues 1 to 21 (MAIH…VDSQ) and 224 to 274 (NPVD…RRSK).

It belongs to the universal ribosomal protein uL2 family. Part of the 50S ribosomal subunit.

The protein resides in the plastid. It localises to the chloroplast. The polypeptide is Large ribosomal subunit protein uL2cz/uL2cy (rpl2-A) (Populus trichocarpa (Western balsam poplar)).